We begin with the raw amino-acid sequence, 368 residues long: Protein trichome birefringence-like 43 (368 aa).

The helical; Signal-anchor for type II membrane protein transmembrane segment at 9–25 (GVVSVMVLMILVLLKQI) threads the bilayer. The GDS motif signature appears at 117–119 (GDS). A DCXHWCLPGXXDXWN motif motif is present at residues 344–358 (DCSHWCLSGVPDSWN).

The protein belongs to the PC-esterase family. TBL subfamily.

It localises to the membrane. May act as a bridging protein that binds pectin and other cell wall polysaccharides. Probably involved in maintaining esterification of pectins. May be involved in the specific O-acetylation of cell wall polymers. The protein is Protein trichome birefringence-like 43 (TBL43) of Arabidopsis thaliana (Mouse-ear cress).